We begin with the raw amino-acid sequence, 433 residues long: Homogentisate 1,2-dioxygenase (433 aa).

H288 serves as the catalytic Proton acceptor. Fe cation is bound by residues H331 and E337. The homogentisate site is built by Y346 and H367. Fe cation is bound at residue H367.

Belongs to the homogentisate dioxygenase family. Hexamer; dimer of trimers. It depends on Fe cation as a cofactor.

It carries out the reaction homogentisate + O2 = 4-maleylacetoacetate + H(+). Its pathway is amino-acid degradation; L-phenylalanine degradation; acetoacetate and fumarate from L-phenylalanine: step 4/6. Its function is as follows. Involved in the catabolism of homogentisate (2,5-dihydroxyphenylacetate or 2,5-OH-PhAc), a central intermediate in the degradation of phenylalanine and tyrosine. Catalyzes the oxidative ring cleavage of the aromatic ring of homogentisate to yield maleylacetoacetate. In Pseudomonas putida (strain W619), this protein is Homogentisate 1,2-dioxygenase.